The primary structure comprises 295 residues: Small ribosomal subunit protein uS2 (295 aa).

The tract at residues 263–295 (KKFSKTKNIDEETNTEFEQALNDADENKNSDNA) is disordered.

This sequence belongs to the universal ribosomal protein uS2 family.

The polypeptide is Small ribosomal subunit protein uS2 (Rickettsia massiliae (strain Mtu5)).